Consider the following 926-residue polypeptide: Alpha-aminoadipic semialdehyde synthase, mitochondrial (926 aa).

A mitochondrion-targeting transit peptide spans 1–27 (MLRVSRTKLGRLSPSLSRGLHHKAVMA). Residues 28–455 (LRREDVNAWE…DAVIASNGML (428 aa)) are lysine-ketoglutarate reductase. An N6-acetyllysine mark is found at Lys-48 and Lys-56. Lys-93 carries the N6-acetyllysine; alternate modification. N6-succinyllysine; alternate is present on Lys-93. Lys-128 carries the N6-acetyllysine modification. An N6-acetyllysine; alternate modification is found at Lys-138. Position 138 is an N6-succinyllysine; alternate (Lys-138). Lys-274 carries the post-translational modification N6-succinyllysine. Lys-286 is subject to N6-acetyllysine; alternate. Lys-286 is modified (N6-succinyllysine; alternate). Lys-333 is modified (N6-succinyllysine). At Lys-458 the chain carries N6-acetyllysine; alternate. Lys-458 bears the N6-succinyllysine; alternate mark. Residues 477-926 (MGTKKKVLVL…MYTTQSTIKL (450 aa)) form a saccharopine dehydrogenase region. NAD(+)-binding residues include Ser-488, Asp-512, and Gln-516. N6-acetyllysine; alternate occurs at positions 523 and 535. Lys-523 and Lys-535 each carry N6-succinyllysine; alternate. Leu-554, Ala-576, and Ser-577 together coordinate NAD(+). 577 to 578 (SY) is an L-saccharopine binding site. Lys-584 carries the post-translational modification N6-acetyllysine; alternate. The residue at position 584 (Lys-584) is an N6-succinyllysine; alternate. 3 residues coordinate NAD(+): Leu-603, Asp-604, and Pro-605. Asp-604 is an L-saccharopine binding site. L-saccharopine is bound at residue Arg-703. Lys-707 carries the post-translational modification N6-acetyllysine. 724-726 (TLR) contacts L-saccharopine. Lys-732 is subject to N6-succinyllysine. Lys-739 is subject to N6-acetyllysine. Lys-761 is modified (N6-acetyllysine; alternate). An N6-succinyllysine; alternate modification is found at Lys-761. Position 780 is an N6-acetyllysine (Lys-780).

The protein in the N-terminal section; belongs to the AlaDH/PNT family. It in the C-terminal section; belongs to the saccharopine dehydrogenase family. As to quaternary structure, homotetramer.

The protein localises to the mitochondrion. The enzyme catalyses L-saccharopine + NADP(+) + H2O = L-lysine + 2-oxoglutarate + NADPH + H(+). It catalyses the reaction L-saccharopine + NAD(+) + H2O = (S)-2-amino-6-oxohexanoate + L-glutamate + NADH + H(+). It participates in amino-acid degradation; L-lysine degradation via saccharopine pathway; glutaryl-CoA from L-lysine: step 1/6. The protein operates within amino-acid degradation; L-lysine degradation via saccharopine pathway; glutaryl-CoA from L-lysine: step 2/6. Its function is as follows. Bifunctional enzyme that catalyzes the first two steps in lysine degradation. This chain is Alpha-aminoadipic semialdehyde synthase, mitochondrial, found in Bos taurus (Bovine).